Reading from the N-terminus, the 251-residue chain is Cell division protein ZapD (251 aa).

It belongs to the ZapD family. In terms of assembly, interacts with FtsZ.

It localises to the cytoplasm. Functionally, cell division factor that enhances FtsZ-ring assembly. Directly interacts with FtsZ and promotes bundling of FtsZ protofilaments, with a reduction in FtsZ GTPase activity. The chain is Cell division protein ZapD from Azoarcus sp. (strain BH72).